Here is a 475-residue protein sequence, read N- to C-terminus: Sulfate adenylyltransferase subunit 1 (475 aa).

One can recognise a tr-type G domain in the interval 24-240 (KSLLRFLTCG…ESAEVERELE (217 aa)). A G1 region spans residues 33–40 (GSVDDGKS). Residue 33–40 (GSVDDGKS) participates in GTP binding. Positions 91–95 (GITID) are G2. Residues 112–115 (DTPG) are G3. Residues 112–116 (DTPGH) and 167–170 (NKMD) contribute to the GTP site. The segment at 167–170 (NKMD) is G4. The G5 stretch occupies residues 204-206 (SAL).

The protein belongs to the TRAFAC class translation factor GTPase superfamily. Classic translation factor GTPase family. CysN/NodQ subfamily. Heterodimer composed of CysD, the smaller subunit, and CysN.

It carries out the reaction sulfate + ATP + H(+) = adenosine 5'-phosphosulfate + diphosphate. The protein operates within sulfur metabolism; hydrogen sulfide biosynthesis; sulfite from sulfate: step 1/3. Functionally, with CysD forms the ATP sulfurylase (ATPS) that catalyzes the adenylation of sulfate producing adenosine 5'-phosphosulfate (APS) and diphosphate, the first enzymatic step in sulfur assimilation pathway. APS synthesis involves the formation of a high-energy phosphoric-sulfuric acid anhydride bond driven by GTP hydrolysis by CysN coupled to ATP hydrolysis by CysD. The protein is Sulfate adenylyltransferase subunit 1 of Aeromonas hydrophila subsp. hydrophila (strain ATCC 7966 / DSM 30187 / BCRC 13018 / CCUG 14551 / JCM 1027 / KCTC 2358 / NCIMB 9240 / NCTC 8049).